We begin with the raw amino-acid sequence, 389 residues long: Protein OSCP1 (389 aa).

As to expression, expressed predominantly in testis, also found in placenta and to a lesser extent in thymus and small intestine; abundantly expressed in tumor-derived cell lines. Ubiquitously expressed.

The protein localises to the basal cell membrane. In terms of biological role, may be involved in drug clearance in the placenta. This chain is Protein OSCP1 (OSCP1), found in Homo sapiens (Human).